Consider the following 228-residue polypeptide: Cytidylate kinase (228 aa).

17–25 contributes to the ATP binding site; the sequence is GPTASGKGT.

It belongs to the cytidylate kinase family. Type 1 subfamily.

Its subcellular location is the cytoplasm. It catalyses the reaction CMP + ATP = CDP + ADP. The enzyme catalyses dCMP + ATP = dCDP + ADP. This chain is Cytidylate kinase, found in Burkholderia ambifaria (strain MC40-6).